Here is a 134-residue protein sequence, read N- to C-terminus: Putative transposase InsN for insertion sequence element IS911A (134 aa).

The protein belongs to the transposase 8 family.

In terms of biological role, involved in the transposition of the insertion sequence IS911. This Escherichia coli (strain K12) protein is Putative transposase InsN for insertion sequence element IS911A (insN1).